Consider the following 602-residue polypeptide: Elongation factor 4 (602 aa).

Residues 7–189 enclose the tr-type G domain; sequence NNIRNFSIIA…RILTAVPPPQ (183 aa). Residues 19-24 and 136-139 contribute to the GTP site; these read DHGKST and NKID.

The protein belongs to the TRAFAC class translation factor GTPase superfamily. Classic translation factor GTPase family. LepA subfamily.

It localises to the cell inner membrane. The enzyme catalyses GTP + H2O = GDP + phosphate + H(+). In terms of biological role, required for accurate and efficient protein synthesis under certain stress conditions. May act as a fidelity factor of the translation reaction, by catalyzing a one-codon backward translocation of tRNAs on improperly translocated ribosomes. Back-translocation proceeds from a post-translocation (POST) complex to a pre-translocation (PRE) complex, thus giving elongation factor G a second chance to translocate the tRNAs correctly. Binds to ribosomes in a GTP-dependent manner. This chain is Elongation factor 4, found in Protochlamydia amoebophila (strain UWE25).